The primary structure comprises 107 residues: U1-lycotoxin-Ls1m (107 aa).

The first 20 residues, 1–20 (MMKVLVVVALLVTLISYSSS), serve as a signal peptide directing secretion. The propeptide occupies 21–41 (EGIDDLEADELLSLMANEQTR). Cystine bridges form between Cys44-Cys59, Cys51-Cys68, Cys58-Cys86, and Cys70-Cys84.

It belongs to the neurotoxin 19 (CSTX) family. 04 (U1-Lctx) subfamily. In terms of tissue distribution, expressed by the venom gland.

It is found in the secreted. The protein is U1-lycotoxin-Ls1m of Lycosa singoriensis (Wolf spider).